A 500-amino-acid polypeptide reads, in one-letter code: ATP synthase subunit beta (500 aa).

155 to 162 contacts ATP; it reads GGAGVGKT.

The protein belongs to the ATPase alpha/beta chains family. In terms of assembly, F-type ATPases have 2 components, CF(1) - the catalytic core - and CF(0) - the membrane proton channel. CF(1) has five subunits: alpha(3), beta(3), gamma(1), delta(1), epsilon(1). CF(0) has three main subunits: a(1), b(2) and c(9-12). The alpha and beta chains form an alternating ring which encloses part of the gamma chain. CF(1) is attached to CF(0) by a central stalk formed by the gamma and epsilon chains, while a peripheral stalk is formed by the delta and b chains.

The protein localises to the cell inner membrane. It carries out the reaction ATP + H2O + 4 H(+)(in) = ADP + phosphate + 5 H(+)(out). Its function is as follows. Produces ATP from ADP in the presence of a proton gradient across the membrane. The catalytic sites are hosted primarily by the beta subunits. In Azobacteroides pseudotrichonymphae genomovar. CFP2, this protein is ATP synthase subunit beta.